Reading from the N-terminus, the 473-residue chain is Glutamate--tRNA ligase (473 aa).

The 'HIGH' region motif lies at 11-21 (PSPTGFLHIGG). A 'KMSKS' region motif is present at residues 240–244 (KLSKR). Lysine 243 is a binding site for ATP.

The protein belongs to the class-I aminoacyl-tRNA synthetase family. Glutamate--tRNA ligase type 1 subfamily. Monomer.

It is found in the cytoplasm. It carries out the reaction tRNA(Glu) + L-glutamate + ATP = L-glutamyl-tRNA(Glu) + AMP + diphosphate. In terms of biological role, catalyzes the attachment of glutamate to tRNA(Glu) in a two-step reaction: glutamate is first activated by ATP to form Glu-AMP and then transferred to the acceptor end of tRNA(Glu). This Rhodopseudomonas palustris (strain HaA2) protein is Glutamate--tRNA ligase.